Reading from the N-terminus, the 320-residue chain is Beta-carotene 4-ketolase 3 (320 aa).

It carries out the reaction echinenone + 2 AH2 + 2 O2 = canthaxanthin + 2 A + 3 H2O. It catalyses the reaction all-trans-beta-carotene + 2 AH2 + 2 O2 = echinenone + 2 A + 3 H2O. It participates in carotenoid biosynthesis. Involved in the biosynthesis of ketocarotenoids which are powerful anti-oxidative molecules. Catalyzes the conversion of beta-carotene to canthaxanthin via echinenone. This Haematococcus lacustris (Green alga) protein is Beta-carotene 4-ketolase 3.